The following is a 254-amino-acid chain: 5'/3'-nucleotidase SurE (254 aa).

A divalent metal cation-binding residues include Asp-8, Asp-9, Ser-39, and Asn-92.

The protein belongs to the SurE nucleotidase family. A divalent metal cation serves as cofactor.

The protein resides in the cytoplasm. The catalysed reaction is a ribonucleoside 5'-phosphate + H2O = a ribonucleoside + phosphate. The enzyme catalyses a ribonucleoside 3'-phosphate + H2O = a ribonucleoside + phosphate. It carries out the reaction [phosphate](n) + H2O = [phosphate](n-1) + phosphate + H(+). Its function is as follows. Nucleotidase with a broad substrate specificity as it can dephosphorylate various ribo- and deoxyribonucleoside 5'-monophosphates and ribonucleoside 3'-monophosphates with highest affinity to 3'-AMP. Also hydrolyzes polyphosphate (exopolyphosphatase activity) with the preference for short-chain-length substrates (P20-25). Might be involved in the regulation of dNTP and NTP pools, and in the turnover of 3'-mononucleotides produced by numerous intracellular RNases (T1, T2, and F) during the degradation of various RNAs. This is 5'/3'-nucleotidase SurE from Edwardsiella ictaluri (strain 93-146).